The following is an 850-amino-acid chain: Protein stoned-A (850 aa).

Positions 1 to 16 (MLKLPKGLKKKKKKSK) are enriched in basic residues. Disordered stretches follow at residues 1–95 (MLKL…AAGG) and 125–164 (KESF…LGQI). The segment at 26–290 (ELEQYKRDLK…QNLLLSESIE (265 aa)) is interaction with Syt. Residues 28–38 (EQYKRDLKAKQ) are compositionally biased toward basic and acidic residues. A compositionally biased stretch (polar residues) spans 78 to 91 (ILNAQQQLSDQNQG). Residues 136 to 164 (AEKKKQKEEEAARLEAEQQEREKQRLGQI) show a composition bias toward basic and acidic residues. The DPF 1 signature appears at 224 to 226 (DPF). Disordered stretches follow at residues 345 to 375 (EEEE…EEDD) and 412 to 498 (GSWA…PPFL). Residues 431-440 (PPPPVRPPTG) show a composition bias toward pro residues. A compositionally biased stretch (acidic residues) spans 451-462 (SEDEEENPEDDP). 2 consecutive short sequence motifs (DPF) follow at residues 461 to 463 (DPF) and 535 to 537 (DPF). Disordered regions lie at residues 573 to 610 (HSLS…QRKS), 634 to 673 (GNEL…TSHV), 738 to 760 (RKKL…FDTS), and 800 to 825 (LGLG…IDPF). 2 stretches are compositionally biased toward basic and acidic residues: residues 574 to 588 (SLSD…DQKE) and 596 to 607 (LEQKETDFDTAQ). 3 short sequence motifs (DPF) span residues 666–668 (DPF), 755–757 (DPF), and 823–825 (DPF).

In terms of assembly, interacts with the second C2 domain of Syt.

Its subcellular location is the cytoplasm. It localises to the synapse. It is found in the cytoplasmic vesicle. The protein resides in the secretory vesicle. The protein localises to the synaptic vesicle. In terms of biological role, adapter protein involved in endocytic recycling of synaptic vesicles membranes. May act by mediating the retrieval of synaptotagmin protein Syt from the plasma membrane, thereby facilitating the internalization of multiple synaptic vesicles from the plasma membrane. The polypeptide is Protein stoned-A (stnA) (Drosophila melanogaster (Fruit fly)).